A 119-amino-acid polypeptide reads, in one-letter code: Microtubule nucleation factor SSNA1 (119 aa).

Position 2 is an N-acetylthreonine (Thr2). Residues 2 to 32 (TQQGAALQNYNNELVKCIEELCQKREELCRQ) are important for localization to the centrosome. Residues 13–70 (NELVKCIEELCQKREELCRQIQEEEDEKQRLQNEVRQLTEKLARVNENLARKIASRNE) adopt a coiled-coil conformation.

This sequence belongs to the SSNA1 family. As to quaternary structure, self-associates to form fibrils. Also forms dimers as well as monomers. Interacts with SPAST. In terms of tissue distribution, widely expressed.

The protein resides in the nucleus. The protein localises to the cytoplasm. It localises to the cytoskeleton. It is found in the microtubule organizing center. Its subcellular location is the centrosome. The protein resides in the centriole. The protein localises to the midbody. It localises to the flagellum basal body. It is found in the flagellum axoneme. Its subcellular location is the cell projection. The protein resides in the axon. Its function is as follows. Microtubule-binding protein which stabilizes dynamic microtubules by slowing growth and shrinkage at both plus and minus ends and serves as a sensor of microtubule damage, protecting microtubules from the microtubule-severing enzyme SPAST. Induces microtubule branching which is mediated by the formation of long SSNA1 fibrils which guide microtubule protofilaments to split apart from the mother microtubule and form daughter microtubules. Plays a role in axon outgrowth and branching. Required for cell division. This Homo sapiens (Human) protein is Microtubule nucleation factor SSNA1.